We begin with the raw amino-acid sequence, 268 residues long: Glucosamine-6-phosphate deaminase (268 aa).

Residue D67 is the Proton acceptor; for enolization step of the active site. N136 (for ring-opening step) is an active-site residue. Catalysis depends on H138, which acts as the Proton acceptor; for ring-opening step. E143 serves as the catalytic For ring-opening step.

It belongs to the glucosamine/galactosamine-6-phosphate isomerase family. NagB subfamily. In terms of assembly, homohexamer.

It carries out the reaction alpha-D-glucosamine 6-phosphate + H2O = beta-D-fructose 6-phosphate + NH4(+). Its pathway is amino-sugar metabolism; N-acetylneuraminate degradation; D-fructose 6-phosphate from N-acetylneuraminate: step 5/5. Its function is as follows. Catalyzes the reversible isomerization-deamination of glucosamine 6-phosphate (GlcN6P) to form fructose 6-phosphate (Fru6P) and ammonium ion. The sequence is that of Glucosamine-6-phosphate deaminase from Shewanella loihica (strain ATCC BAA-1088 / PV-4).